The chain runs to 166 residues: Regulator of ribonuclease activity A (166 aa).

The protein belongs to the RraA family. In terms of assembly, homotrimer. Binds to both RNA-binding sites in the C-terminal region of Rne and to RhlB.

It localises to the cytoplasm. Its function is as follows. Globally modulates RNA abundance by binding to RNase E (Rne) and regulating its endonucleolytic activity. Can modulate Rne action in a substrate-dependent manner by altering the composition of the degradosome. Modulates RNA-binding and helicase activities of the degradosome. This chain is Regulator of ribonuclease activity A, found in Histophilus somni (strain 2336) (Haemophilus somnus).